Consider the following 112-residue polypeptide: U15-hexatoxin-Hi1a (112 aa).

A signal peptide spans 1–18; it reads MNTLIAFAVLLLLSTTLG. A propeptide spanning residues 19 to 73 is cleaved from the precursor; sequence DTDDKVSHEEIQERKELSGISEELLLQQLEAVEAALMEKERLEEMEEDGNSREKR. 3 disulfide bridges follow: Cys-74/Cys-88, Cys-81/Cys-93, and Cys-87/Cys-107.

Belongs to the neurotoxin 14 (magi-1) family. 08 (Ltx-4) subfamily. Expressed by the venom gland.

The protein resides in the secreted. Functionally, probable ion channel inhibitor. The chain is U15-hexatoxin-Hi1a from Hadronyche infensa (Fraser island funnel-web spider).